Consider the following 201-residue polypeptide: Histidine biosynthesis bifunctional protein HisIE (201 aa).

The tract at residues 1 to 114 (MLTAQQIEKL…FAPAQTEWGF (114 aa)) is phosphoribosyl-AMP cyclohydrolase. Residues 115–201 (LYQLEKLLAS…SCVIRRLRER (87 aa)) are phosphoribosyl-ATP pyrophosphohydrolase.

The protein in the N-terminal section; belongs to the PRA-CH family. This sequence in the C-terminal section; belongs to the PRA-PH family.

It is found in the cytoplasm. The catalysed reaction is 1-(5-phospho-beta-D-ribosyl)-ATP + H2O = 1-(5-phospho-beta-D-ribosyl)-5'-AMP + diphosphate + H(+). The enzyme catalyses 1-(5-phospho-beta-D-ribosyl)-5'-AMP + H2O = 1-(5-phospho-beta-D-ribosyl)-5-[(5-phospho-beta-D-ribosylamino)methylideneamino]imidazole-4-carboxamide. It participates in amino-acid biosynthesis; L-histidine biosynthesis; L-histidine from 5-phospho-alpha-D-ribose 1-diphosphate: step 2/9. It functions in the pathway amino-acid biosynthesis; L-histidine biosynthesis; L-histidine from 5-phospho-alpha-D-ribose 1-diphosphate: step 3/9. The polypeptide is Histidine biosynthesis bifunctional protein HisIE (Photorhabdus laumondii subsp. laumondii (strain DSM 15139 / CIP 105565 / TT01) (Photorhabdus luminescens subsp. laumondii)).